Reading from the N-terminus, the 504-residue chain is Subtilisin-like protease 1 (504 aa).

Residues 1–19 (MGVFRFISISLAAVSAANA) form the signal peptide. Residues 20 to 116 (AQILSMPHAQ…VEPDTIVSVH (97 aa)) constitute a propeptide that is removed on maturation. An Inhibitor I9 domain is found at 34–116 (SYIVMMKDDT…VEPDTIVSVH (83 aa)). The Peptidase S8 domain maps to 126–400 (SWGLARISNP…NVLINNGGAK (275 aa)). Active-site charge relay system residues include D158 and H190. The disordered stretch occupies residues 172-198 (AIWGSNQVNDGDDRDGSGHGTHTSGTM). 2 N-linked (GlcNAc...) asparagine glycosylation sites follow: N233 and N251. The segment covering 282–294 (NDNQDAQSSSPAS) has biased composition (polar residues). The disordered stretch occupies residues 282–312 (NDNQDAQSSSPASEPSVCTVGSSAEDDSRSS). The active-site Charge relay system is the S345. Polar residues predominate over residues 378–394 (TSSITDAGPGTPTNVLI). The disordered stretch occupies residues 378–483 (TSSITDAGPG…YPGGDNFDFD (106 aa)). Composition is skewed to pro residues over residues 405-449 (NPNP…PGQP) and 457-473 (APAP…PHTP).

The protein belongs to the peptidase S8 family.

It localises to the secreted. In terms of biological role, secreted subtilisin-like serine protease with keratinolytic activity that contributes to pathogenicity. This Trichophyton rubrum (Athlete's foot fungus) protein is Subtilisin-like protease 1 (SUB1).